A 144-amino-acid chain; its full sequence is Acidic phospholipase A2 S15-109 (144 aa).

A signal peptide spans 1-19; the sequence is MYPAHLLVLLAVCVSLLGA. The propeptide occupies 20-27; that stretch reads SDIPPQPL. 7 disulfide bridges follow: Cys-38/Cys-98, Cys-54/Cys-143, Cys-56/Cys-72, Cys-71/Cys-126, Cys-78/Cys-119, Cys-87/Cys-112, and Cys-105/Cys-117. Ca(2+)-binding residues include Tyr-55, Gly-57, and Gly-59. His-75 is an active-site residue. Asp-76 contacts Ca(2+). The active site involves Asp-120.

Belongs to the phospholipase A2 family. Group I subfamily. D49 sub-subfamily. The cofactor is Ca(2+). In terms of tissue distribution, expressed by the venom gland.

It is found in the secreted. The enzyme catalyses a 1,2-diacyl-sn-glycero-3-phosphocholine + H2O = a 1-acyl-sn-glycero-3-phosphocholine + a fatty acid + H(+). In terms of biological role, snake venom phospholipase A2 (PLA2) that inhibits collagen-induced platelet aggregation. PLA2 catalyzes the calcium-dependent hydrolysis of the 2-acyl groups in 3-sn-phosphoglycerides. The protein is Acidic phospholipase A2 S15-109 of Austrelaps superbus (Lowland copperhead snake).